Reading from the N-terminus, the 228-residue chain is Cytochrome c oxidase subunit 2 (228 aa).

The Mitochondrial intermembrane segment spans residues 1–14; the sequence is MPHASQLSLQEAMG. Residues 15-45 traverse the membrane as a helical segment; that stretch reads PTMEEVIFLHDHVLLLTCLMTMVITMFTLTA. The Mitochondrial matrix segment spans residues 46–59; sequence TTTALTHNDPTEEV. Residues 60–87 form a helical membrane-spanning segment; the sequence is EQLEAAWTVAPIMILILTALPSVRSLYL. At 88–228 the chain is on the mitochondrial intermembrane side; the sequence is MEEVFNPYLT…HFEQWLISEQ (141 aa). Residues His-162, Cys-197, Glu-199, Cys-201, His-205, and Met-208 each contribute to the Cu cation site. Residue Glu-199 coordinates Mg(2+).

The protein belongs to the cytochrome c oxidase subunit 2 family. In terms of assembly, component of the cytochrome c oxidase (complex IV, CIV), a multisubunit enzyme composed of 14 subunits. The complex is composed of a catalytic core of 3 subunits MT-CO1, MT-CO2 and MT-CO3, encoded in the mitochondrial DNA, and 11 supernumerary subunits COX4I, COX5A, COX5B, COX6A, COX6B, COX6C, COX7A, COX7B, COX7C, COX8 and NDUFA4, which are encoded in the nuclear genome. The complex exists as a monomer or a dimer and forms supercomplexes (SCs) in the inner mitochondrial membrane with NADH-ubiquinone oxidoreductase (complex I, CI) and ubiquinol-cytochrome c oxidoreductase (cytochrome b-c1 complex, complex III, CIII), resulting in different assemblies (supercomplex SCI(1)III(2)IV(1) and megacomplex MCI(2)III(2)IV(2)). Found in a complex with TMEM177, COA6, COX18, COX20, SCO1 and SCO2. Interacts with TMEM177 in a COX20-dependent manner. Interacts with COX20. Interacts with COX16. Cu cation serves as cofactor.

It localises to the mitochondrion inner membrane. It catalyses the reaction 4 Fe(II)-[cytochrome c] + O2 + 8 H(+)(in) = 4 Fe(III)-[cytochrome c] + 2 H2O + 4 H(+)(out). Its function is as follows. Component of the cytochrome c oxidase, the last enzyme in the mitochondrial electron transport chain which drives oxidative phosphorylation. The respiratory chain contains 3 multisubunit complexes succinate dehydrogenase (complex II, CII), ubiquinol-cytochrome c oxidoreductase (cytochrome b-c1 complex, complex III, CIII) and cytochrome c oxidase (complex IV, CIV), that cooperate to transfer electrons derived from NADH and succinate to molecular oxygen, creating an electrochemical gradient over the inner membrane that drives transmembrane transport and the ATP synthase. Cytochrome c oxidase is the component of the respiratory chain that catalyzes the reduction of oxygen to water. Electrons originating from reduced cytochrome c in the intermembrane space (IMS) are transferred via the dinuclear copper A center (CU(A)) of subunit 2 and heme A of subunit 1 to the active site in subunit 1, a binuclear center (BNC) formed by heme A3 and copper B (CU(B)). The BNC reduces molecular oxygen to 2 water molecules using 4 electrons from cytochrome c in the IMS and 4 protons from the mitochondrial matrix. This Lycodon semicarinatus (Ryukyu odd-tooth snake) protein is Cytochrome c oxidase subunit 2 (MT-CO2).